Reading from the N-terminus, the 376-residue chain is MASPKLHDFRHIVVKVGSSLLIDSAAGEVRAGWLAALAADIAELHRGGRDVMVVSSGSIALGRSRLKLPRGPLKLEESQAAAAVGQIELARTWSEVLGAHGIGAGQILVTFQDTEERRRYLNARSTIAKLLEWRAVPVINENDTVATTEIRYGDNDRLAARVATMASADLLILLSDIDGLYTAPPGNDPDATLIPVVEAITAEIEGMAGAAGSELSRGGMRTKIEAAKIATSAGTHMLIASGKIDHPLRAIAEGGKCTWFLTPANPVTARKRWIAGTLEPKGTLTIDAGAVSALRAGKSLLPAGVIRVDGQFSRGDAVIVRGPDTHEIGRGLVAYDAEDAEKIKGHSSPDVMMILGITGRAEMIHRDDLVVGTAPT.

ATP is bound at residue Lys15. Substrate is bound by residues Ser56, Asp143, and Asn155. An ATP-binding site is contributed by 175–176 (SD). Positions 281–358 (KGTLTIDAGA…PDVMMILGIT (78 aa)) constitute a PUA domain.

The protein belongs to the glutamate 5-kinase family.

It localises to the cytoplasm. The catalysed reaction is L-glutamate + ATP = L-glutamyl 5-phosphate + ADP. It participates in amino-acid biosynthesis; L-proline biosynthesis; L-glutamate 5-semialdehyde from L-glutamate: step 1/2. Its function is as follows. Catalyzes the transfer of a phosphate group to glutamate to form L-glutamate 5-phosphate. The chain is Glutamate 5-kinase from Rhodopseudomonas palustris (strain TIE-1).